Consider the following 661-residue polypeptide: MQTHRAPERPSGADKLEIAVNAYSKTPLLDTIRTPDDLRKLKIEQVRQVADELRQETIDAVSVTGGHFGAGLGVVELTTAIHYVFDTPRDRLIWDVGHQAYPHKILTGRRDRIRTLRTGGGLSGFTKRSESDYDPFGAAHSSTSISAGLGMAVARDLSGGKNNVIAVIGDGAMSAGMAYEAMNNAGAMNSRLIVILNDNDMSIAPPVGAMSAYLSRLYSGKTYRTLREAAKQINKRLPKIIANRANRVEEYSRGFMMDGGTLFEELGFYYVGPIDGHNLDHLLPVLKNVRDMEEGPILVHVVTQKGKGYGPAEASADKYHAVVKFDVATGTQAKAKPNAPAYQNVFGQSLVKEAQKDEKIVAITAAMPSGTGVDIFNKAFPDRTFDVGIAEQHAVTFAAGLASEGYKPFCAIYSTFLQRGYDQIVHDVAIQNLPVRFAIDRAGLVGADGATHAGSFDNAYLGCLPNMVIMAAADEAELVHMVATQVAIDDRPSSLRYPRGEGRGIEMPEVGIPLEIGKGRMIRQGSKIALLSFGTRLAECEKAADELAAHGLSTTIADARFMKPLDTELVLKLARDHEILITIEEGSVGGFGSHVAQFLTDQGALDSGMVKFRTMVLPDVFQDHDTPAAMYARAGLDAKGIVAKVFEALGKDVKTETVKLA.

Residues His98 and 139–141 (AHS) contribute to the thiamine diphosphate site. Asp170 is a binding site for Mg(2+). Thiamine diphosphate contacts are provided by residues 171-172 (GA), Asn199, Tyr309, and Glu391. Asn199 lines the Mg(2+) pocket.

Belongs to the transketolase family. DXPS subfamily. As to quaternary structure, homodimer. The cofactor is Mg(2+). Thiamine diphosphate serves as cofactor.

The catalysed reaction is D-glyceraldehyde 3-phosphate + pyruvate + H(+) = 1-deoxy-D-xylulose 5-phosphate + CO2. It participates in metabolic intermediate biosynthesis; 1-deoxy-D-xylulose 5-phosphate biosynthesis; 1-deoxy-D-xylulose 5-phosphate from D-glyceraldehyde 3-phosphate and pyruvate: step 1/1. Functionally, catalyzes the acyloin condensation reaction between C atoms 2 and 3 of pyruvate and glyceraldehyde 3-phosphate to yield 1-deoxy-D-xylulose-5-phosphate (DXP). This is 1-deoxy-D-xylulose-5-phosphate synthase from Bradyrhizobium diazoefficiens (strain JCM 10833 / BCRC 13528 / IAM 13628 / NBRC 14792 / USDA 110).